A 596-amino-acid chain; its full sequence is MPTQRDSSTMSHTVAGGGSGDHSHQVRVKAYYRGDIMITHFEPSISFEGLCNEVRDMCSFDNEQLFTMKWIDEEGDPCTVSSQLELEEAFRLYELNKDSELLIHVFPCVPERPGMPCPGEDKSIYRRGARRWRKLYCANGHTFQAKRFNRRAHCAICTDRIWGLGRQGYKCINCKLLVHKKCHKLVTIECGRHSLPPEPMMPMDQSSMHSDHAQTVIPYNPSSHESLDQVGEEKEAMNTRESGKASSSLGLQDFDLLRVIGRGSYAKVLLVRLKKTDRIYAMKVVKKELVNDDEDIDWVQTEKHVFEQASNHPFLVGLHSCFQTESRLFFVIEYVNGGDLMFHMQRQRKLPEEHARFYSAEISLALNYLHERGIIYRDLKLDNVLLDSEGHIKLTDYGMCKEGLRPGDTTSTFCGTPNYIAPEILRGEDYGFSVDWWALGVLMFEMMAGRSPFDIVGSSDNPDQNTEDYLFQVILEKQIRIPRSLSVKAASVLKSFLNKDPKERLGCHPQTGFADIQGHPFFRNVDWDMMEQKQVVPPFKPNISGEFGLDNFDSQFTNEPVQLTPDDDDIVRKIDQSEFEGFEYINPLLMSAEECV.

The segment covering 1–12 (MPTQRDSSTMSH) has biased composition (polar residues). The tract at residues 1–23 (MPTQRDSSTMSHTVAGGGSGDHS) is disordered. Proline 2 is subject to N-acetylproline. The tract at residues 2–28 (PTQRDSSTMSHTVAGGGSGDHSHQVRV) is required for interaction with RAB2. Residues 2 to 253 (PTQRDSSTMS…KASSSLGLQD (252 aa)) form a regulatory domain region. Threonine 3 bears the Phosphothreonine mark. Phosphoserine is present on residues serine 7 and serine 8. Residue threonine 9 is modified to Phosphothreonine. The PB1 domain maps to 25 to 108 (QVRVKAYYRG…SELLIHVFPC (84 aa)). An interaction with PARD6A region spans residues 72–91 (DEEGDPCTVSSQLELEEAFR). A Pseudosubstrate motif is present at residues 125-134 (YRRGARRWRK). The segment at 140-190 (GHTFQAKRFNRRAHCAICTDRIWGLGRQGYKCINCKLLVHKKCHKLVTIEC) adopts a Phorbol-ester/DAG-type zinc-finger fold. Residues 221–246 (PSSHESLDQVGEEKEAMNTRESGKAS) form a disordered region. The span at 225–243 (ESLDQVGEEKEAMNTRESG) shows a compositional bias: basic and acidic residues. The Protein kinase domain maps to 254–522 (FDLLRVIGRG…FADIQGHPFF (269 aa)). Residue 260–268 (IGRGSYAKV) participates in ATP binding. Phosphotyrosine; by SRC is present on residues tyrosine 265 and tyrosine 280. Lysine 283 lines the ATP pocket. Tyrosine 334 is subject to Phosphotyrosine; by SRC. Aspartate 378 acts as the Proton acceptor in catalysis. At threonine 412 the chain carries Phosphothreonine; by PDPK1. The AGC-kinase C-terminal domain occupies 523–594 (RNVDWDMMEQ…INPLLMSAEE (72 aa)). Threonine 564 carries the post-translational modification Phosphothreonine.

Belongs to the protein kinase superfamily. AGC Ser/Thr protein kinase family. PKC subfamily. In terms of assembly, forms a complex with SQSTM1 and MP2K5. Interacts directly with SQSTM1. Interacts with IKBKB. Interacts with PARD6A, PARD6B and PARD6G. Part of a quaternary complex containing aPKC, PARD3, a PARD6 protein (PARD6A, PARD6B or PARD6G) and a GTPase protein (CDC42 or RAC1). Part of a complex with LLGL1 and PARD6B. Interacts with ADAP1/CENTA1. Interaction with SMG1, through the ZN-finger domain, activates the kinase activity. Interacts with CDK7. Forms a complex with RAB2A and GAPDH involved in recruitment onto the membrane of vesicular tubular clusters (VTCs). Interacts with ECT2 ('Thr-359' phosphorylated form). Interacts with VAMP2. Interacts with WDFY2 (via WD repeats 1-3). Phosphorylation at Thr-412 in the activation loop is not mandatory for activation. Upon neuronal growth factor (NGF) stimulation, phosphorylated by SRC at Tyr-265, Tyr-280 and Tyr-334. Phosphorylation at Tyr-265 facilitates binding to KPNB1/importin-beta regulating entry of PRKCI into the nucleus. Phosphorylation on Tyr-334 is important for NF-kappa-B stimulation. Phosphorylated at Thr-564 during the initial phase of long term potentiation.

Its subcellular location is the cytoplasm. It is found in the membrane. The protein resides in the endosome. The protein localises to the nucleus. The catalysed reaction is L-seryl-[protein] + ATP = O-phospho-L-seryl-[protein] + ADP + H(+). It carries out the reaction L-threonyl-[protein] + ATP = O-phospho-L-threonyl-[protein] + ADP + H(+). With respect to regulation, atypical PKCs (PRKCI and PRKCZ) exhibit an elevated basal enzymatic activity (that may be due to the interaction with SMG1 or SQSTM1) and are not regulated by diacylglycerol, phosphatidylserine, phorbol esters or calcium ions. Two specific sites, Thr-412 (activation loop of the kinase domain) and Thr-564 (turn motif), need to be phosphorylated for its full activation. Might also be a target for novel lipid activators that are elevated during nutrient-stimulated insulin secretion. Functionally, calcium- and diacylglycerol-independent serine/ threonine-protein kinase that plays a general protective role against apoptotic stimuli, is involved in NF-kappa-B activation, cell survival, differentiation and polarity, and contributes to the regulation of microtubule dynamics in the early secretory pathway. Is necessary for BCR-ABL oncogene-mediated resistance to apoptotic drug in leukemia cells, protecting leukemia cells against drug-induced apoptosis. In cultured neurons, prevents amyloid beta protein-induced apoptosis by interrupting cell death process at a very early step. In glioblastoma cells, may function downstream of phosphatidylinositol 3-kinase (PI(3)K) and PDPK1 in the promotion of cell survival by phosphorylating and inhibiting the pro-apoptotic factor BAD. Can form a protein complex in non-small cell lung cancer (NSCLC) cells with PARD6A and ECT2 and regulate ECT2 oncogenic activity by phosphorylation, which in turn promotes transformed growth and invasion. In response to nerve growth factor (NGF), acts downstream of SRC to phosphorylate and activate IRAK1, allowing the subsequent activation of NF-kappa-B and neuronal cell survival. Functions in the organization of the apical domain in epithelial cells by phosphorylating EZR. This step is crucial for activation and normal distribution of EZR at the early stages of intestinal epithelial cell differentiation. Forms a protein complex with LLGL1 and PARD6B independently of PARD3 to regulate epithelial cell polarity. Plays a role in microtubule dynamics in the early secretory pathway through interaction with RAB2A and GAPDH and recruitment to vesicular tubular clusters (VTCs). In human coronary artery endothelial cells (HCAEC), is activated by saturated fatty acids and mediates lipid-induced apoptosis. Involved in early synaptic long term potentiation phase in CA1 hippocampal cells and short term memory formation. This is Protein kinase C iota type (PRKCI) from Pongo abelii (Sumatran orangutan).